The primary structure comprises 375 residues: Membrane progesterone receptor epsilon (375 aa).

The tract at residues 1–39 is disordered; it reads MPRRLQQRGAGVKGPPASTSRRSHPASASAPRSPPAATT. Topologically, residues 1-84 are cytoplasmic; sequence MPRRLQQRGA…VLKPTNETLN (84 aa). A compositionally biased stretch (low complexity) spans 15 to 39; sequence PPASTSRRSHPASASAPRSPPAATT. The helical transmembrane segment at 85–105 threads the bilayer; the sequence is FWTHFIPLLLFLSKFCRLFFL. Residues 106–114 are Extracellular-facing; sequence GGSDVPFHH. A helical transmembrane segment spans residues 115–135; sequence PWLLPLWCYASGVLLTFAMSC. Residues 136–160 are Cytoplasmic-facing; the sequence is TAHVFSCLSLRLRAAFFYLDYASIS. Residues 161-181 traverse the membrane as a helical segment; sequence YYGFGSTVAYYYYLLPSLSLL. At 182-203 the chain is on the extracellular side; the sequence is DARVMTPYVQQRLGWHVDCTRL. A helical transmembrane segment spans residues 204 to 224; the sequence is IAVYRALVLPVAFVLAVACTV. Residues 225 to 241 are Cytoplasmic-facing; that stretch reads ACCKSRTDWCSYPFALR. A helical membrane pass occupies residues 242 to 262; it reads TFVFVMPLSMACPIMLESWLF. At 263-299 the chain is on the extracellular side; sequence DLRGENPTLFVHFYRRYFWLVVAAFFNVSKIPERIQP. Residues 300-320 traverse the membrane as a helical segment; it reads GLFDIIGHSHQLFHIFTFLSI. The Cytoplasmic segment spans residues 321 to 341; the sequence is YDQVYYVEEGLRQFLQAPPAA. The chain crosses the membrane as a helical span at residues 342-362; the sequence is PTFSGTVGYMLLLVVCLGLVI. Topologically, residues 363–375 are extracellular; the sequence is RKFLNSTEFCSKK.

It belongs to the ADIPOR family. Homodimer.

The protein localises to the cell membrane. In terms of biological role, plasma membrane progesterone (P4) receptor coupled to G proteins. Seems to act through a G(s) mediated pathway. May be involved in regulating rapid P4 signaling in the nervous system. Also binds dehydroepiandrosterone (DHEA), pregnanolone, pregnenolone and allopregnanolone. This is Membrane progesterone receptor epsilon from Mus musculus (Mouse).